The primary structure comprises 93 residues: MIRSELIQKIADENPHLTQRHVERIVNTVFEEIIEALARGDRVELRGFGAFSVKARDARVGRNPRTGEAVEVEDKKVPFFKTGKLLRDRLNTK.

It belongs to the bacterial histone-like protein family. In terms of assembly, heterodimer of an alpha and a beta chain.

Its function is as follows. This protein is one of the two subunits of integration host factor, a specific DNA-binding protein that functions in genetic recombination as well as in transcriptional and translational control. The polypeptide is Integration host factor subunit beta (Cereibacter sphaeroides (strain KD131 / KCTC 12085) (Rhodobacter sphaeroides)).